A 620-amino-acid chain; its full sequence is Toxin coregulated pilus biosynthesis protein I (620 aa).

Positions 344–580 (TMNDLSIKQT…DVAKQMEDIR (237 aa)) constitute a Methyl-accepting transducer domain.

The protein belongs to the methyl-accepting chemotaxis (MCP) protein family.

The protein localises to the cell inner membrane. In terms of biological role, may function as an environmental regulator of TCP biogenesis. Negatively regulates the synthesis of the major pilin subunit of TCP (TcpA). The chain is Toxin coregulated pilus biosynthesis protein I (tcpI) from Vibrio cholerae serotype O1 (strain ATCC 39315 / El Tor Inaba N16961).